The sequence spans 859 residues: Probable helicase A859L (859 aa).

Residues 178–349 (YQELQRSGRA…KNRELFGGVA (172 aa)) enclose the Helicase ATP-binding domain. 191-198 (MACRCGKT) lines the ATP pocket. The short motif at 298–301 (DECH) is the DEAH box element. Residues 394–553 (QIIMALAYLK…RFYEHLLNPS (160 aa)) form the Helicase C-terminal domain.

The protein belongs to the asfivirus helicase A859L family.

This chain is Probable helicase A859L, found in African swine fever virus (isolate Pig/Kenya/KEN-50/1950) (ASFV).